The chain runs to 397 residues: DnaJ homolog subfamily A member 4 (397 aa).

The region spanning 4–70 is the J domain; the sequence is ETQYYDILGV…RDIYDQGGEQ (67 aa). A Phosphoserine modification is found at serine 18. The segment at 122–206 adopts a CR-type zinc-finger fold; sequence GITKKLALQK…CSGAKVTREK (85 aa). The Zn(2+) site is built by cysteine 135, cysteine 138, cysteine 151, cysteine 154, cysteine 178, cysteine 181, cysteine 194, and cysteine 197. CXXCXGXG motif repeat units lie at residues 135 to 142, 151 to 158, 178 to 185, and 194 to 201; these read CEKCEGIG, CPLCKGRG, CIECKGQG, and CENCSGAK. The segment covering 366 to 380 has biased composition (basic and acidic residues); that stretch reads EFNPNEQSWRQHREA. The tract at residues 366-397 is disordered; the sequence is EFNPNEQSWRQHREAYEEDDEEPRAGVQCQTA. Residue cysteine 394 is modified to Cysteine methyl ester. A lipid anchor (S-farnesyl cysteine) is attached at cysteine 394. The propeptide at 395–397 is removed in mature form; the sequence is QTA.

Specifically expressed in testis and heart.

It localises to the membrane. The protein is DnaJ homolog subfamily A member 4 (Dnaja4) of Mus musculus (Mouse).